A 408-amino-acid polypeptide reads, in one-letter code: SERPINE1 mRNA-binding protein 1 (408 aa).

Position 25 is a phosphoserine (S25). Disordered stretches follow at residues 33 to 292 and 328 to 408; these read AAEN…TLDE and SKSE…PALA. Residues 51–68 are compositionally biased toward low complexity; the sequence is AKSAAQAAAQTNSNAAGK. At K52 the chain carries N6-acetyllysine; alternate. Residue K52 forms a Glycyl lysine isopeptide (Lys-Gly) (interchain with G-Cter in SUMO1); alternate linkage. K68 is modified (N6-acetyllysine). 3 stretches are compositionally biased toward basic and acidic residues: residues 70–80, 89–114, and 122–162; these read LRKESQKDRKN, VDKK…RRPD, and KIID…DRPI. Residue K102 forms a Glycyl lysine isopeptide (Lys-Gly) (interchain with G-Cter in SUMO1); alternate linkage. K102 participates in a covalent cross-link: Glycyl lysine isopeptide (Lys-Gly) (interchain with G-Cter in SUMO2); alternate. 2 positions are modified to N6-acetyllysine: K122 and K140. Residues 164–182 are compositionally biased toward gly residues; the sequence is GRGGLGRGRGGRGRGMGRG. R165 and R188 each carry omega-N-methylarginine. A compositionally biased stretch (basic and acidic residues) spans 183-199; that stretch reads DGFDSRGKREFDRHSGS. Phosphoserine is present on S197. The residue at position 199 (S199) is a Phosphoserine; by MTOR. Phosphoserine is present on residues S203, S205, and S208. Residue K211 is modified to N6-acetyllysine; alternate. K211 is covalently cross-linked (Glycyl lysine isopeptide (Lys-Gly) (interchain with G-Cter in SUMO2); alternate). At R216 the chain carries Omega-N-methylarginine. S221 carries the phosphoserine modification. H222 is covalently cross-linked (Glycyl lysine isopeptide (Lys-Gly) (interchain with G-Cter in SUMO2)). A Phosphothreonine; by MTOR modification is found at T226. A Glycyl lysine isopeptide (Lys-Gly) (interchain with G-Cter in SUMO1); alternate cross-link involves residue K228. K228 participates in a covalent cross-link: Glycyl lysine isopeptide (Lys-Gly) (interchain with G-Cter in SUMO2); alternate. Residue K228 forms a Glycyl lysine isopeptide (Lys-Gly) (interchain with G-Cter in SUMO2) linkage. Phosphoserine is present on residues L231, S234, and Y237. At S234 the chain carries Phosphothreonine. A Phosphothreonine modification is found at K240. Polar residues predominate over residues 240-253; it reads KQISYNYSDLDQSN. A compositionally biased stretch (basic and acidic residues) spans 261–275; sequence GEEHHPVADTENKEN. K281 participates in a covalent cross-link: Glycyl lysine isopeptide (Lys-Gly) (interchain with G-Cter in SUMO1); alternate. Residue K281 forms a Glycyl lysine isopeptide (Lys-Gly) (interchain with G-Cter in SUMO2); alternate linkage. Composition is skewed to basic and acidic residues over residues 282–292 and 328–342; these read EEGPKEMTLDE and SKSE…VMDH. An N6-acetyllysine modification is found at K329. At S330 the chain carries Phosphoserine. Residues 363–372 show a composition bias toward gly residues; sequence GRPGRGGRGG. Residues R364, R367, and R370 each carry the omega-N-methylarginine modification. S392 and S394 each carry phosphoserine.

It belongs to the SERBP1-HABP4 family. Associates with mature 80S ribosomes. Interacts with EEF2/eEF2; interaction sequesters EEF2/eEF2 at the A-site of the ribosome, thereby blocking the interaction sites of the mRNA-tRNA complex, promoting ribosome stabilization and hibernation. Interacts with SPIN1. Interacts with CHD3 and TDRD3. Interacts with ZDHHC17 (via ANK repeats). Post-translationally, phosphorylation by MTOR inhibits SERBP1 and relieves ribosome hibernation. In terms of tissue distribution, expressed at high level in the heart, skeletal muscle and kidney, and at low levels in placenta, liver and brain.

It localises to the cytoplasm. Its subcellular location is the nucleus. The protein localises to the perinuclear region. Its function is as follows. Ribosome-binding protein that promotes ribosome hibernation, a process during which ribosomes are stabilized in an inactive state and preserved from proteasomal degradation. Acts via its association with EEF2/eEF2 factor, sequestering EEF2/eEF2 at the A-site of the ribosome and promoting ribosome stabilization and storage in an inactive state. May also play a role in the regulation of mRNA stability: binds to the 3'-most 134 nt of the SERPINE1/PAI1 mRNA, a region which confers cyclic nucleotide regulation of message decay. Seems to play a role in PML-nuclear bodies formation. The sequence is that of SERPINE1 mRNA-binding protein 1 from Homo sapiens (Human).